The following is a 76-amino-acid chain: Sulfur carrier protein TusA (76 aa).

Cysteine 15 acts as the Cysteine persulfide intermediate in catalysis.

Belongs to the sulfur carrier protein TusA family. As to quaternary structure, mostly a monomer, a small portion forms homodimer via intermolecular disulfide bonds. Tightly interacts with DsrEFH.

Its subcellular location is the cytoplasm. It participates in energy metabolism; sulfur metabolism. Sulfur carrier protein involved in sulfur trafficking for oxidative dissimilatory sulfur metabolism. Component of a sulfur relay system that starts with the sulfur-mobilizing rhodanese-like protein Rhd_2599 (Alvin_2599), which transfers the sulfur from a low-molecular-weight thiol, maybe glutathione, to the TusA protein (Alvin_2600); TusA serves as the sulfur donor for DsrEFH, which persulfurates DsrC; persulfurated DsrC very probably serves as a direct substrate for reverse-acting sulfite reductase, DsrAB. TusA seems to be not exclusively dedicated to sulfur oxidation and may have other important roles in the cell. Might also act as a sulfur mediator required for 2-thiouridine formation of tRNA. The protein is Sulfur carrier protein TusA of Allochromatium vinosum (strain ATCC 17899 / DSM 180 / NBRC 103801 / NCIMB 10441 / D) (Chromatium vinosum).